The primary structure comprises 330 residues: MAFLEDGNHTIVTEFILLGLTDDPVLRDILFTIILCIYLVTVSGNLSTILLIRVSSQLHHPMYFFLSHLASVDIGISSSVTPNMLANFLVKPNTISYIGCSIQFTSAVFLATVECFLLAAMAYDRFVAICNPLLYSTKMSREACIQLVVGSYIQGLLNASFFTLSFFSLIFCGPNRINHFYCDLAPLVELSCSDVTLAVVITSISAGFITLTTVFVIAISYSCIFITIMKMHSTESRYKAFSTCTSHLTAVTLFYGTTMFIYVMPKSSYSTDQNKVLSVFYMVVIPMLNPLIYSLRNNEIKGALKRYLGKKIFSYGNLFCKTHYNDTHQV.

Residues 1–28 (MAFLEDGNHTIVTEFILLGLTDDPVLRD) are Extracellular-facing. The N-linked (GlcNAc...) asparagine glycan is linked to Asn-8. The chain crosses the membrane as a helical span at residues 29-49 (ILFTIILCIYLVTVSGNLSTI). Residues 50 to 57 (LLIRVSSQ) are Cytoplasmic-facing. A helical membrane pass occupies residues 58–78 (LHHPMYFFLSHLASVDIGISS). The Extracellular portion of the chain corresponds to 79-102 (SVTPNMLANFLVKPNTISYIGCSI). An intrachain disulfide couples Cys-100 to Cys-192. A helical transmembrane segment spans residues 103–123 (QFTSAVFLATVECFLLAAMAY). Residues 124–136 (DRFVAICNPLLYS) lie on the Cytoplasmic side of the membrane. Residues 137–157 (TKMSREACIQLVVGSYIQGLL) traverse the membrane as a helical segment. Residues 158 to 199 (NASFFTLSFFSLIFCGPNRINHFYCDLAPLVELSCSDVTLAV) are Extracellular-facing. A helical membrane pass occupies residues 200-220 (VITSISAGFITLTTVFVIAIS). Residues 221–240 (YSCIFITIMKMHSTESRYKA) lie on the Cytoplasmic side of the membrane. Residues 241–261 (FSTCTSHLTAVTLFYGTTMFI) form a helical membrane-spanning segment. Over 262 to 274 (YVMPKSSYSTDQN) the chain is Extracellular. A helical transmembrane segment spans residues 275–295 (KVLSVFYMVVIPMLNPLIYSL). Over 296–330 (RNNEIKGALKRYLGKKIFSYGNLFCKTHYNDTHQV) the chain is Cytoplasmic.

Belongs to the G-protein coupled receptor 1 family.

It is found in the cell membrane. Potential odorant receptor. This is Olfactory receptor 5P70 from Mus musculus (Mouse).